Reading from the N-terminus, the 536-residue chain is Beta-hexosaminidase subunit beta (536 aa).

A signal peptide spans M1–L31. N63 carries an N-linked (GlcNAc...) asparagine glycan. A disulfide bond links C70 and C116. N169 and N306 each carry an N-linked (GlcNAc...) asparagine glycan. 2 disulfide bridges follow: C288/C339 and C513/C530. The active-site Proton donor is the E334.

The protein belongs to the glycosyl hydrolase 20 family. In terms of assembly, there are 3 forms of beta-hexosaminidase: hexosaminidase A is a heterodimer composed of one subunit alpha and one subunit beta (chain A and B); hexosaminidase B is a homodimer of two beta subunits (two chains A and B); hexosaminidase S is a homodimer of two alpha subunits. The composition of the dimer (isozyme A versus isozyme S) has a significant effect on the substrate specificity of the alpha subunit active site.

It localises to the lysosome. The protein localises to the cytoplasmic vesicle. Its subcellular location is the secretory vesicle. It is found in the cortical granule. The catalysed reaction is Hydrolysis of terminal non-reducing N-acetyl-D-hexosamine residues in N-acetyl-beta-D-hexosaminides.. It carries out the reaction N-acetyl-beta-D-galactosaminyl-(1-&gt;4)-beta-D-3-sulfogalactosyl-(1-&gt;4)-beta-D-glucosyl-(1&lt;-&gt;1')-ceramide + H2O = a beta-D-3-sulfogalactosyl-(1-&gt;4)-beta-D-glucosyl-(1&lt;-&gt;1')-ceramide + N-acetyl-beta-D-galactosamine. It catalyses the reaction a ganglioside GM2 (d18:1(4E)) + H2O = a ganglioside GM3 (d18:1(4E)) + N-acetyl-beta-D-galactosamine. The enzyme catalyses a ganglioside GM2 + H2O = a ganglioside GM3 + N-acetyl-beta-D-galactosamine. The catalysed reaction is beta-D-GalNAc-(1-&gt;4)-alpha-L-IdoA-(1-&gt;3)-beta-D-GalNAc-4-sulfate-(1-&gt;4)-alpha-L-IdoA-(1-&gt;3)-D-GalNAc-4-sulfate + H2O = alpha-L-IdoA-(1-&gt;3)-beta-D-GalNAc-4-sulfate-(1-&gt;4)-alpha-L-IdoA-(1-&gt;3)-D-GalNAc-4-sulfate + N-acetyl-D-galactosamine. It carries out the reaction N-acetyl-beta-D-6-sulfogalactosaminyl-(1-&gt;4)-alpha-L-iduronyl-(1-&gt;3)-N-acetyl-D-6-sulfogalactosamine + H2O = alpha-L-iduronyl-(1-&gt;3)-N-acetyl-D-6-sulfogalactosamine + N-acetyl-D-6-sulfogalactosamine. Addition of GM2A stimulates the hydrolysis of sulfated glycosphingolipid SM2 and the ganglioside GM2. Functionally, hydrolyzes the non-reducing end N-acetyl-D-hexosamine and/or sulfated N-acetyl-D-hexosamine of glycoconjugates, such as the oligosaccharide moieties from proteins and neutral glycolipids, or from certain mucopolysaccharides. The isozyme B does not hydrolyze each of these substrates, however hydrolyzes efficiently neutral oligosaccharide. Only the isozyme A is responsible for the degradation of GM2 gangliosides in the presence of GM2A. During fertilization is responsible, at least in part, for the zona block to polyspermy. Present in the cortical granules of non-activated oocytes, is exocytosed during the cortical reaction in response to oocyte activation and inactivates the sperm galactosyltransferase-binding site, accounting for the block in sperm binding to the zona pellucida. The chain is Beta-hexosaminidase subunit beta from Mus musculus (Mouse).